We begin with the raw amino-acid sequence, 454 residues long: UDP-N-acetylmuramoylalanine--D-glutamate ligase (454 aa).

An ATP-binding site is contributed by 114-120; it reads GTNGKTT.

Belongs to the MurCDEF family.

Its subcellular location is the cytoplasm. It catalyses the reaction UDP-N-acetyl-alpha-D-muramoyl-L-alanine + D-glutamate + ATP = UDP-N-acetyl-alpha-D-muramoyl-L-alanyl-D-glutamate + ADP + phosphate + H(+). It functions in the pathway cell wall biogenesis; peptidoglycan biosynthesis. Its function is as follows. Cell wall formation. Catalyzes the addition of glutamate to the nucleotide precursor UDP-N-acetylmuramoyl-L-alanine (UMA). This chain is UDP-N-acetylmuramoylalanine--D-glutamate ligase, found in Desulfitobacterium hafniense (strain DSM 10664 / DCB-2).